The chain runs to 129 residues: Follitropin subunit beta (129 aa).

Positions 1–18 are cleaved as a signal peptide; that stretch reads MKSVQFCFLFCCWRAICC. Disulfide bonds link Cys-21–Cys-69, Cys-35–Cys-84, Cys-38–Cys-122, Cys-46–Cys-100, Cys-50–Cys-102, and Cys-105–Cys-112. 2 N-linked (GlcNAc...) asparagine glycosylation sites follow: Asn-25 and Asn-42.

The protein belongs to the glycoprotein hormones subunit beta family. Heterodimer. The active follitropin is a heterodimer composed of an alpha chain/CGA shared with other hormones and a unique beta chain/FSHB shown here.

It is found in the secreted. Functionally, together with the alpha chain CGA constitutes follitropin, the follicle-stimulating hormone, and provides its biological specificity to the hormone heterodimer. Binds FSHR, a G protein-coupled receptor, on target cells to activate downstream signaling pathways. Follitropin is involved in follicle development and spermatogenesis in reproductive organs. The protein is Follitropin subunit beta (FSHB) of Capra hircus (Goat).